The sequence spans 2208 residues: RNA-directed RNA polymerase L (2208 aa).

Positions 26-284 (KDALLSQVHP…LHQDSDTINC (259 aa)) are endonuclease. Positions 51, 89, and 102 each coordinate Mn(2+). The active site involves Lys115. One can recognise a RdRp catalytic domain in the interval 1171 to 1367 (CDMKMAVNNG…YLSSKLNKFV (197 aa)). Residue Asp1329 participates in Mg(2+) binding.

This sequence belongs to the Bunyavirales RNA polymerase family. As to quaternary structure, homomultimer; the oligomeric structure is essential for the polymerase activity. Interacts with nucleoprotein N. Interacts with protein Z; this interaction inhibits viral transcription and replication, Z partially blocks the product exit tunnel for the releasing nascent RNA product. Mn(2+) is required as a cofactor. Mg(2+) serves as cofactor.

It localises to the virion. Its subcellular location is the host cytoplasm. It catalyses the reaction RNA(n) + a ribonucleoside 5'-triphosphate = RNA(n+1) + diphosphate. In terms of biological role, RNA-dependent RNA polymerase, which is responsible for the replication and transcription of the viral RNA genome using antigenomic RNA as an intermediate. During transcription, synthesizes subgenomic RNAs and assures their capping by a cap-snatching mechanism, which involves the endonuclease activity cleaving the host capped pre-mRNAs. These short capped RNAs are then used as primers for viral transcription. The 3'-end of subgenomic mRNAs molecules are heterogeneous and not polyadenylated. The replicase function is to direct synthesis of antigenomic and genomic RNA which are encapsidated and non capped. As a consequence of the use of the same enzyme for both transcription and replication, these mechanisms need to be well coordinated. These processes may be regulated by proteins N and Z in a dose-dependent manner. Z protein inhibits the viral polymerase L und thus the viral transcription and RNA synthesis. This is RNA-directed RNA polymerase L from Homo sapiens (Human).